A 247-amino-acid polypeptide reads, in one-letter code: Coproheme decarboxylase (247 aa).

Fe-coproporphyrin III contacts are provided by residues R129, 143-147 (YPMDK), H170, Q183, and S221. Y143 is an active-site residue.

Belongs to the ChdC family. Type 1 subfamily. The cofactor is Fe-coproporphyrin III.

It catalyses the reaction Fe-coproporphyrin III + 2 H2O2 + 2 H(+) = heme b + 2 CO2 + 4 H2O. It carries out the reaction Fe-coproporphyrin III + H2O2 + H(+) = harderoheme III + CO2 + 2 H2O. The enzyme catalyses harderoheme III + H2O2 + H(+) = heme b + CO2 + 2 H2O. It participates in porphyrin-containing compound metabolism; protoheme biosynthesis. Its function is as follows. Involved in coproporphyrin-dependent heme b biosynthesis. Catalyzes the decarboxylation of Fe-coproporphyrin III (coproheme) to heme b (protoheme IX), the last step of the pathway. The reaction occurs in a stepwise manner with a three-propionate intermediate. The chain is Coproheme decarboxylase from Bacillus mycoides (strain KBAB4) (Bacillus weihenstephanensis).